Consider the following 281-residue polypeptide: Bis(5'-nucleosyl)-tetraphosphatase, symmetrical (281 aa).

It belongs to the Ap4A hydrolase family.

The enzyme catalyses P(1),P(4)-bis(5'-adenosyl) tetraphosphate + H2O = 2 ADP + 2 H(+). Functionally, hydrolyzes diadenosine 5',5'''-P1,P4-tetraphosphate to yield ADP. In Acidovorax sp. (strain JS42), this protein is Bis(5'-nucleosyl)-tetraphosphatase, symmetrical.